The chain runs to 471 residues: Ribosomal protein uS12 methylthiotransferase RimO (471 aa).

An MTTase N-terminal domain is found at Ile2–Ala122. [4Fe-4S] cluster-binding residues include Cys11, Cys47, Cys84, Cys166, Cys170, and Cys173. A Radical SAM core domain is found at Leu152–Asp395. A TRAM domain is found at Lys398–Gly458.

Belongs to the methylthiotransferase family. RimO subfamily. It depends on [4Fe-4S] cluster as a cofactor.

It is found in the cytoplasm. It carries out the reaction L-aspartate(89)-[ribosomal protein uS12]-hydrogen + (sulfur carrier)-SH + AH2 + 2 S-adenosyl-L-methionine = 3-methylsulfanyl-L-aspartate(89)-[ribosomal protein uS12]-hydrogen + (sulfur carrier)-H + 5'-deoxyadenosine + L-methionine + A + S-adenosyl-L-homocysteine + 2 H(+). Its function is as follows. Catalyzes the methylthiolation of an aspartic acid residue of ribosomal protein uS12. The sequence is that of Ribosomal protein uS12 methylthiotransferase RimO from Opitutus terrae (strain DSM 11246 / JCM 15787 / PB90-1).